The following is a 213-amino-acid chain: MTDQSHQCVIIGISGASASGKSLISSTLYRELRDQVGDQHIGVISEDSYYKDQSHLTMEERVKTNYDHPSSMDHSLLIKHLQMLKSGQAIEVPQYSYVEHTRKQETVHIELKKVIILEGILLLTDARLRNEMNFSIFVDTPLDICLLRRMRRDVNERGRSMDSVMEQYQKTVRPMFLQFIEPSKQYADIIVPRGGKNRIAIDILKAKISQFFE.

15 to 22 (GASASGKS) serves as a coordination point for ATP.

It belongs to the uridine kinase family.

The protein localises to the cytoplasm. It catalyses the reaction uridine + ATP = UMP + ADP + H(+). It carries out the reaction cytidine + ATP = CMP + ADP + H(+). The protein operates within pyrimidine metabolism; CTP biosynthesis via salvage pathway; CTP from cytidine: step 1/3. Its pathway is pyrimidine metabolism; UMP biosynthesis via salvage pathway; UMP from uridine: step 1/1. The protein is Uridine kinase of Pectobacterium atrosepticum (strain SCRI 1043 / ATCC BAA-672) (Erwinia carotovora subsp. atroseptica).